We begin with the raw amino-acid sequence, 577 residues long: Acyl-coenzyme A synthetase ACSM1, mitochondrial (577 aa).

A mitochondrion-targeting transit peptide spans 1 to 31; that stretch reads MQWLMRFRTLWGIHKSFHNIHPAPSQLRCRS. Position 85 is an N6-succinyllysine (Lys85). An N6-acetyllysine; alternate modification is found at Lys146. At Lys146 the chain carries N6-succinyllysine; alternate. Lys183 carries the N6-succinyllysine modification. N6-acetyllysine; alternate is present on Lys204. N6-succinyllysine; alternate is present on Lys204. At Lys214 the chain carries N6-acetyllysine. 226 to 234 lines the ATP pocket; sequence TSGTTGFPK. Position 237 is an N6-succinyllysine (Lys237). An N6-acetyllysine; alternate mark is found at Lys356 and Lys391. Lys356 and Lys391 each carry N6-succinyllysine; alternate. 2 residues coordinate ATP: Asp452 and Arg467. Lys531 carries the post-translational modification N6-acetyllysine. At Lys538 the chain carries N6-acetyllysine; alternate. Lys538 bears the N6-succinyllysine; alternate mark. N6-acetyllysine is present on Lys549. Lys563 contacts ATP.

The protein belongs to the ATP-dependent AMP-binding enzyme family. In terms of assembly, monomer. Mg(2+) serves as cofactor. Mn(2+) is required as a cofactor.

The protein localises to the mitochondrion matrix. The protein resides in the mitochondrion. The catalysed reaction is a medium-chain fatty acid + ATP + CoA = a medium-chain fatty acyl-CoA + AMP + diphosphate. It carries out the reaction benzoate + ATP + CoA = benzoyl-CoA + AMP + diphosphate. The enzyme catalyses (R)-lipoate + GTP + H(+) = (R)-lipoyl-GMP + diphosphate. It catalyses the reaction octanoate + ATP + CoA = octanoyl-CoA + AMP + diphosphate. The catalysed reaction is decanoate + ATP + CoA = decanoyl-CoA + AMP + diphosphate. It carries out the reaction dodecanoate + ATP + CoA = dodecanoyl-CoA + AMP + diphosphate. The enzyme catalyses tetradecanoate + ATP + CoA = tetradecanoyl-CoA + AMP + diphosphate. It catalyses the reaction hexanoate + ATP + CoA = hexanoyl-CoA + AMP + diphosphate. The catalysed reaction is butanoate + ATP + CoA = butanoyl-CoA + AMP + diphosphate. It carries out the reaction hexadecanoate + ATP + CoA = hexadecanoyl-CoA + AMP + diphosphate. Its activity is regulated as follows. Activated by monovalent cations, such as potassium, rubidium or ammonium. Its function is as follows. Catalyzes the activation of fatty acids by CoA to produce an acyl-CoA, the first step in fatty acid metabolism. Capable of activating medium-chain fatty acids (e.g. butyric (C4) to decanoic (C10) acids), and certain carboxylate-containing xenobiotics, e.g. benzoate. Also catalyzes the activation of lipoate to lipoyl-nucleoside monophosphate. Activates lipoate with GTP at a 1000-fold higher rate than with ATP and activates both (R)- and (S)-lipoate to the respective lipoyl-GMP, with a preference for (R)-lipoate. The sequence is that of Acyl-coenzyme A synthetase ACSM1, mitochondrial (ACSM1) from Homo sapiens (Human).